A 506-amino-acid polypeptide reads, in one-letter code: Kynurenine 3-monooxygenase (506 aa).

This sequence belongs to the aromatic-ring hydroxylase family. KMO subfamily. The cofactor is FAD.

The protein resides in the mitochondrion outer membrane. It catalyses the reaction L-kynurenine + NADPH + O2 + H(+) = 3-hydroxy-L-kynurenine + NADP(+) + H2O. The protein operates within cofactor biosynthesis; NAD(+) biosynthesis; quinolinate from L-kynurenine: step 1/3. Catalyzes the hydroxylation of L-kynurenine (L-Kyn) to form 3-hydroxy-L-kynurenine (L-3OHKyn). Required for synthesis of quinolinic acid. The polypeptide is Kynurenine 3-monooxygenase (bna4) (Emericella nidulans (strain FGSC A4 / ATCC 38163 / CBS 112.46 / NRRL 194 / M139) (Aspergillus nidulans)).